The following is a 1253-amino-acid chain: Myosin-1 (1253 aa).

A disordered region spans residues 1-40 (MGHSRRPVGGEKKSRGFGRSKAAADVGDGRQAGKPQVKKA). One can recognise a Myosin motor domain in the interval 50-729 (IGVSDLTLLS…TLFALEAMRD (680 aa)). An ATP-binding site is contributed by 143–150 (GESGAGKT). A Phosphoserine modification is found at S371. The actin-binding stretch occupies residues 418-500 (SIGILDIYGF…PGVFAALNDA (83 aa)). 2 consecutive IQ domains span residues 733–753 (HNMA…RIEC) and 754–779 (ATRI…QGHQ). The TH1 domain occupies 787 to 977 (RRRMSLLGSR…TIHTGAGEPA (191 aa)). Disordered regions lie at residues 959 to 1083 (TGDD…PKKP) and 1139 to 1253 (QVAP…DDDW). Residues 1029–1055 (PQPAAAQPAAPQPAARVVPQPVAAVAA) show a composition bias toward low complexity. Pro residues-rich tracts occupy residues 1068–1081 (APPP…PAPK) and 1143–1155 (APKP…PPAA). An SH3 domain is found at 1080-1141 (PKKPTAKALY…PEAYLEEQVA (62 aa)). Low complexity-rich tracts occupy residues 1156-1173 (PRST…AKAK) and 1221-1235 (NSAS…LAEA).

It belongs to the TRAFAC class myosin-kinesin ATPase superfamily. Myosin family. In terms of processing, phosphorylation of the TEDS site (Ser-371) is required for the polarization of the actin cytoskeleton. Phosphorylation probably activates the myosin-I ATPase activity.

It localises to the cytoplasm. Its subcellular location is the cytoskeleton. The protein localises to the actin patch. In terms of biological role, type-I myosin implicated in the organization of the actin cytoskeleton. Required for proper actin cytoskeleton polarization. At the cell cortex, assembles in patch-like structures together with proteins from the actin-polymerizing machinery and promotes actin assembly. Functions as actin nucleation-promoting factor (NPF) for the Arp2/3 complex. Plays an important role in polarized growth, spore germination, hyphal morphogenesis, and septal wall formation. The polypeptide is Myosin-1 (myoA) (Aspergillus clavatus (strain ATCC 1007 / CBS 513.65 / DSM 816 / NCTC 3887 / NRRL 1 / QM 1276 / 107)).